The sequence spans 404 residues: Cysteine desulfurase IscS (404 aa).

Pyridoxal 5'-phosphate-binding positions include 75–76 (AT), Asn155, Gln183, and 203–205 (SAH). Residue Lys206 is modified to N6-(pyridoxal phosphate)lysine. Pyridoxal 5'-phosphate is bound at residue Thr243. Cys328 acts as the Cysteine persulfide intermediate in catalysis. Residue Cys328 coordinates [2Fe-2S] cluster.

It belongs to the class-V pyridoxal-phosphate-dependent aminotransferase family. NifS/IscS subfamily. In terms of assembly, homodimer. Forms a heterotetramer with IscU, interacts with other sulfur acceptors. Pyridoxal 5'-phosphate is required as a cofactor.

It is found in the cytoplasm. The catalysed reaction is (sulfur carrier)-H + L-cysteine = (sulfur carrier)-SH + L-alanine. It participates in cofactor biosynthesis; iron-sulfur cluster biosynthesis. Functionally, master enzyme that delivers sulfur to a number of partners involved in Fe-S cluster assembly, tRNA modification or cofactor biosynthesis. Catalyzes the removal of elemental sulfur atoms from cysteine to produce alanine. Functions as a sulfur delivery protein for Fe-S cluster synthesis onto IscU, an Fe-S scaffold assembly protein, as well as other S acceptor proteins. The sequence is that of Cysteine desulfurase IscS from Neisseria meningitidis serogroup C (strain 053442).